We begin with the raw amino-acid sequence, 429 residues long: Palmitoyltransferase ZDHHC23 (429 aa).

Topologically, residues 1–81 (MKPVKKKKTE…RIPWLRGAKK (81 aa)) are cytoplasmic. The helical transmembrane segment at 82–102 (VNISILPPLVLLPVLLRVASW) threads the bilayer. Residue histidine 103 is a topological domain, lumenal. Residues 104–124 (FLLGVVVLTSLPMLALWYYYL) traverse the membrane as a helical segment. Topologically, residues 125-130 (THRRKE) are cytoplasmic. The helical transmembrane segment at 131–151 (QTLFFLSLGLFSLGYMYYVFL) threads the bilayer. Over 152–159 (QEVVPQGH) the chain is Lumenal. The helical transmembrane segment at 160–180 (VGPAQLALLTCGLFLILVALY) threads the bilayer. At 181–296 (RAKKNPGYLS…NSCVGESNHQ (116 aa)) the chain is on the cytoplasmic side. The segment at 212–247 (QEKTKGFPGTDTSGSLNNRTLKDDAKGSSRVGLDSP) is disordered. A compositionally biased stretch (polar residues) spans 221–230 (TDTSGSLNNR). Residues 253–303 (DWCAKCQLVRPARAWHCRICGICVRRMDHHCVWINSCVGESNHQAFILALS) form the DHHC domain. The active-site S-palmitoyl cysteine intermediate is the cysteine 283. The helical transmembrane segment at 297 to 317 (AFILALSIFLLTSVYGISLTL) threads the bilayer. At 318 to 347 (NTICRDRSLFTALFYCPGVYANYSSALSFT) the chain is on the lumenal side. A helical transmembrane segment spans residues 348–368 (CVWYSVIITAGMAYIFLIQLI). Over 369–429 (NISYNVTERE…TVHTPAEDIV (61 aa)) the chain is Cytoplasmic. The interaction with NOS1 stretch occupies residues 426 to 429 (EDIV).

The protein belongs to the DHHC palmitoyltransferase family. As to quaternary structure, interacts with NOS1. Expressed in the brain (at protein level), with highest levels in olfactory bulb, piriform cortex and hippocampus.

It is found in the golgi apparatus membrane. Its subcellular location is the golgi apparatus. The protein resides in the trans-Golgi network membrane. The enzyme catalyses L-cysteinyl-[protein] + hexadecanoyl-CoA = S-hexadecanoyl-L-cysteinyl-[protein] + CoA. In terms of biological role, palmitoyltransferase that could catalyze the addition of palmitate onto various protein substrates and be involved in a variety of cellular processes. Palmitoyltransferase that mediates palmitoylation of KCNMA1, regulating localization of KCNMA1 to the plasma membrane. May be involved in NOS1 regulation and targeting to the synaptic membrane. In Rattus norvegicus (Rat), this protein is Palmitoyltransferase ZDHHC23.